Here is a 529-residue protein sequence, read N- to C-terminus: Corneodesmosin (529 aa).

Positions 1–32 (MGSSRAPWMGRVGGHGMMALLLAGLLLPGTLA) are cleaved as a signal peptide. Disordered regions lie at residues 38–248 (FSDP…SVSG) and 383–492 (GSTG…SSAG). Low complexity-rich tracts occupy residues 58 to 83 (GKGDSSGFSSYSGSSSSGSSISSARS), 90 to 100 (GSSSGSSIAQG), 111 to 175 (GYSQ…NGSA), 189 to 231 (PSQP…SGGP), 392 to 408 (SPSSSRVPSSSSISSSS), and 426 to 441 (PGTGSFSSSSSSQSSG). Asn172 carries N-linked (GlcNAc...) asparagine glycosylation. The segment covering 449–467 (GSKSSSSGHPCMSVSSLTL) has biased composition (polar residues).

As to expression, exclusively expressed in skin.

The protein resides in the secreted. Its function is as follows. Important for the epidermal barrier integrity. The protein is Corneodesmosin (CDSN) of Homo sapiens (Human).